The following is a 221-amino-acid chain: Thiamine-phosphate synthase (221 aa).

4-amino-2-methyl-5-(diphosphooxymethyl)pyrimidine-binding positions include 41-45 (QLRDK) and Asn82. Residues Asp83 and Asp102 each coordinate Mg(2+). Ser120 provides a ligand contact to 4-amino-2-methyl-5-(diphosphooxymethyl)pyrimidine. 146–148 (TPT) contacts 2-[(2R,5Z)-2-carboxy-4-methylthiazol-5(2H)-ylidene]ethyl phosphate. 4-amino-2-methyl-5-(diphosphooxymethyl)pyrimidine is bound at residue Lys149. Gly177 contributes to the 2-[(2R,5Z)-2-carboxy-4-methylthiazol-5(2H)-ylidene]ethyl phosphate binding site.

This sequence belongs to the thiamine-phosphate synthase family. Requires Mg(2+) as cofactor.

The catalysed reaction is 2-[(2R,5Z)-2-carboxy-4-methylthiazol-5(2H)-ylidene]ethyl phosphate + 4-amino-2-methyl-5-(diphosphooxymethyl)pyrimidine + 2 H(+) = thiamine phosphate + CO2 + diphosphate. It carries out the reaction 2-(2-carboxy-4-methylthiazol-5-yl)ethyl phosphate + 4-amino-2-methyl-5-(diphosphooxymethyl)pyrimidine + 2 H(+) = thiamine phosphate + CO2 + diphosphate. The enzyme catalyses 4-methyl-5-(2-phosphooxyethyl)-thiazole + 4-amino-2-methyl-5-(diphosphooxymethyl)pyrimidine + H(+) = thiamine phosphate + diphosphate. The protein operates within cofactor biosynthesis; thiamine diphosphate biosynthesis; thiamine phosphate from 4-amino-2-methyl-5-diphosphomethylpyrimidine and 4-methyl-5-(2-phosphoethyl)-thiazole: step 1/1. Its function is as follows. Condenses 4-methyl-5-(beta-hydroxyethyl)thiazole monophosphate (THZ-P) and 2-methyl-4-amino-5-hydroxymethyl pyrimidine pyrophosphate (HMP-PP) to form thiamine monophosphate (TMP). This is Thiamine-phosphate synthase from Mycolicibacterium vanbaalenii (strain DSM 7251 / JCM 13017 / BCRC 16820 / KCTC 9966 / NRRL B-24157 / PYR-1) (Mycobacterium vanbaalenii).